We begin with the raw amino-acid sequence, 218 residues long: Alkylmercury lyase (218 aa).

The protein belongs to the MerB family.

It catalyses the reaction an alkylmercury + H(+) = an alkane + Hg(2+). Its function is as follows. Cleaves the carbon-mercury bond of organomercurials such as phenylmercuric acetate. One product is Hg(2+), which is subsequently detoxified by the mercuric reductase. This Clostridium butyricum protein is Alkylmercury lyase.